A 923-amino-acid polypeptide reads, in one-letter code: Mitochondrial 10-formyltetrahydrofolate dehydrogenase (923 aa).

A mitochondrion; not cleaved-targeting transit peptide spans 1 to 19; that stretch reads MLRRGSQALRRFSTGRVYF. Positions 23-331 are hydrolase domain; sequence LKLALIGQSL…PASQYFSTGE (309 aa). A Phosphoserine modification is found at serine 31. Lysine 60 is modified (N6-succinyllysine). 110 to 112 serves as a coordination point for (6R)-10-formyltetrahydrofolate; the sequence is QFI. Histidine 128 acts as the Proton donor in catalysis. Residue aspartate 164 coordinates (6R)-10-formyltetrahydrofolate. The Carrier domain maps to 339–416; it reads AEEVKVAETI…GFIQKVVRKL (78 aa). Serine 375 carries the O-(pantetheine 4'-phosphoryl)serine modification. The aldehyde dehydrogenase domain stretch occupies residues 438–923; it reads MVKMPYQCFI…LKTKTVTLEY (486 aa). Residues 592-594 and 618-621 each bind NADP(+); these read IPW and KPAQ. Serine 650 bears the Phosphoserine mark. Residues 651-656 and 671-672 contribute to the NADP(+) site; these read GGIAGQ and GS. N6-succinyllysine is present on lysine 681. Residue glutamate 694 is the Proton acceptor of the active site. An NADP(+)-binding site is contributed by 694–695; the sequence is EL. Cysteine 728 acts as the Proton donor in catalysis. Lysine 778 provides a ligand contact to NADP(+). Residue lysine 788 is modified to N6-succinyllysine. Residue 825 to 827 coordinates NADP(+); it reads ESF. N6-acetyllysine is present on lysine 903.

It in the N-terminal section; belongs to the GART family. This sequence in the C-terminal section; belongs to the aldehyde dehydrogenase family. ALDH1L subfamily. Phosphopantetheinylation at Ser-375 by AASDHPPT is required for the formyltetrahydrofolate dehydrogenase activity. As to expression, highly expressed in pancreas, heart, brain and skeletal muscle.

It localises to the mitochondrion. It carries out the reaction (6R)-10-formyltetrahydrofolate + NADP(+) + H2O = (6S)-5,6,7,8-tetrahydrofolate + CO2 + NADPH + H(+). Its function is as follows. Mitochondrial 10-formyltetrahydrofolate dehydrogenase that catalyzes the NADP(+)-dependent conversion of 10-formyltetrahydrofolate to tetrahydrofolate and carbon dioxide. The chain is Mitochondrial 10-formyltetrahydrofolate dehydrogenase from Homo sapiens (Human).